The chain runs to 191 residues: Early nodulin-like protein 8 (191 aa).

A signal peptide spans 1–22 (MGVMSLSKTMVVVVLQVMILLG). The Phytocyanin domain occupies 31 to 133 (TLYKVGDLDA…YQKLLVSVGT (103 aa)). A disulfide bond links C87 and C121. N-linked (GlcNAc...) asparagine glycosylation is found at N104 and N108. Residue S165 is the site of GPI-anchor amidated serine attachment. Positions 166–191 (SASSSLISAFSTVAASLACAVVGAIM) are cleaved as a propeptide — removed in mature form.

Belongs to the early nodulin-like (ENODL) family. As to expression, mostly expressed in seedlings and roots, and, to a lower extent, in leaves, flowers, stems and seeds.

The protein localises to the cell membrane. In terms of biological role, may act as a carbohydrate transporter. This is Early nodulin-like protein 8 from Arabidopsis thaliana (Mouse-ear cress).